The primary structure comprises 227 residues: Phosphoribosylformylglycinamidine synthase subunit PurQ (227 aa).

Residues 3-225 (FAVIVFPGSN…LKQWRETYVV (223 aa)) form the Glutamine amidotransferase type-1 domain. The Nucleophile role is filled by Cys-86. Residues His-194 and Glu-196 contribute to the active site.

Part of the FGAM synthase complex composed of 1 PurL, 1 PurQ and 2 PurS subunits.

Its subcellular location is the cytoplasm. The enzyme catalyses N(2)-formyl-N(1)-(5-phospho-beta-D-ribosyl)glycinamide + L-glutamine + ATP + H2O = 2-formamido-N(1)-(5-O-phospho-beta-D-ribosyl)acetamidine + L-glutamate + ADP + phosphate + H(+). The catalysed reaction is L-glutamine + H2O = L-glutamate + NH4(+). It functions in the pathway purine metabolism; IMP biosynthesis via de novo pathway; 5-amino-1-(5-phospho-D-ribosyl)imidazole from N(2)-formyl-N(1)-(5-phospho-D-ribosyl)glycinamide: step 1/2. Part of the phosphoribosylformylglycinamidine synthase complex involved in the purines biosynthetic pathway. Catalyzes the ATP-dependent conversion of formylglycinamide ribonucleotide (FGAR) and glutamine to yield formylglycinamidine ribonucleotide (FGAM) and glutamate. The FGAM synthase complex is composed of three subunits. PurQ produces an ammonia molecule by converting glutamine to glutamate. PurL transfers the ammonia molecule to FGAR to form FGAM in an ATP-dependent manner. PurS interacts with PurQ and PurL and is thought to assist in the transfer of the ammonia molecule from PurQ to PurL. The protein is Phosphoribosylformylglycinamidine synthase subunit PurQ of Bacillus thuringiensis (strain Al Hakam).